Here is a 258-residue protein sequence, read N- to C-terminus: Indole-3-glycerol phosphate synthase (258 aa).

It belongs to the TrpC family.

It catalyses the reaction 1-(2-carboxyphenylamino)-1-deoxy-D-ribulose 5-phosphate + H(+) = (1S,2R)-1-C-(indol-3-yl)glycerol 3-phosphate + CO2 + H2O. The protein operates within amino-acid biosynthesis; L-tryptophan biosynthesis; L-tryptophan from chorismate: step 4/5. This Legionella pneumophila (strain Paris) protein is Indole-3-glycerol phosphate synthase.